Reading from the N-terminus, the 468-residue chain is uncharacterized protein (468 aa).

The signal sequence occupies residues 1 to 19; the sequence is MRVLSVLLVALTVAGSAYS. N86 and N334 each carry an N-linked (GlcNAc...) asparagine glycan. A disordered region spans residues 401–421; the sequence is NPSTNLPETSPPTEQPTAPPA. Residues 409–421 show a composition bias toward pro residues; that stretch reads TSPPTEQPTAPPA. N435 carries an N-linked (GlcNAc...) asparagine glycan. The GPI-like-anchor amidated asparagine moiety is linked to residue N444. The propeptide at 445-468 is removed in mature form; it reads SASSIEMSKLVVAILSLFILAFFH.

Its subcellular location is the cell membrane. This is an uncharacterized protein from Dictyostelium discoideum (Social amoeba).